A 196-amino-acid chain; its full sequence is Thymidine kinase (196 aa).

ATP is bound at residue 17–24 (GPMFAGKT). E92 functions as the Proton acceptor in the catalytic mechanism. F121 is a substrate binding site. The Zn(2+) site is built by C146 and C149. 166–170 (LILAG) provides a ligand contact to substrate. C179 and C182 together coordinate Zn(2+).

This sequence belongs to the thymidine kinase family.

The enzyme catalyses thymidine + ATP = dTMP + ADP + H(+). In terms of biological role, phosphorylates thymidine. ASFV replicates in the cytoplasm of infected cells and contains genes encoding a number of enzymes needed for DNA synthesis, including thymidine kinase. Important for growth in swine macrophages in vitro and is a virus virulence factor in swine. In Ornithodoros (relapsing fever ticks), this protein is Thymidine kinase.